Consider the following 217-residue polypeptide: Elongation factor Ts (217 aa).

The involved in Mg(2+) ion dislocation from EF-Tu stretch occupies residues 82-85 (TDFV).

The protein belongs to the EF-Ts family.

It is found in the cytoplasm. Its function is as follows. Associates with the EF-Tu.GDP complex and induces the exchange of GDP to GTP. It remains bound to the aminoacyl-tRNA.EF-Tu.GTP complex up to the GTP hydrolysis stage on the ribosome. This chain is Elongation factor Ts, found in Synechococcus sp. (strain RCC307).